Here is a 310-residue protein sequence, read N- to C-terminus: MKTLTRKLSRTAITLVLVILAFIAIFRAWVYYTESPWTRDARFSADVVAIAPDVAGLITHVNVHDNQLVKKDQVLFTIDQPRYQKALAEAEADVAYYQVLAQEKRQEASRRNRLGVQAMSREEIDQANNVLQTVLHQLAKAQATRDLAKLDLERTVIRAPADGWVTNLNVYAGEFITRGSTAVALVKKNSFYVQAYMEETKLEGVRPGYRAEITPLGSNRVLKGTVDSVAAGVTNASSTSDAKGMATIDSNLEWVRLAQRVPVRIRLDEQQGNLWPAGTTATVVITGKQDRDASQDSFFRKLAHRLREFG.

The helical transmembrane segment at Ala12 to Tyr32 threads the bilayer.

Belongs to the membrane fusion protein (MFP) (TC 8.A.1) family.

The protein localises to the cell inner membrane. Its function is as follows. Forms an efflux pump with AaeB. The sequence is that of p-hydroxybenzoic acid efflux pump subunit AaeA from Salmonella schwarzengrund (strain CVM19633).